A 103-amino-acid polypeptide reads, in one-letter code: ATP synthase F(0) complex subunit g, mitochondrial (103 aa).

The residue at position 2 (Ala-2) is an N-acetylalanine. Residues Lys-11, Lys-24, Lys-35, and Lys-54 each carry the N6-acetyllysine modification.

It belongs to the ATPase g subunit family. As to quaternary structure, component of the ATP synthase complex composed at least of ATP5F1A/subunit alpha, ATP5F1B/subunit beta, ATP5MC1/subunit c (homooctomer), MT-ATP6/subunit a, MT-ATP8/subunit 8, ATP5ME/subunit e, ATP5MF/subunit f, ATP5MG/subunit g, ATP5MK/subunit k, ATP5MJ/subunit j, ATP5F1C/subunit gamma, ATP5F1D/subunit delta, ATP5F1E/subunit epsilon, ATP5PF/subunit F6, ATP5PB/subunit b, ATP5PD/subunit d, ATP5PO/subunit OSCP. ATP synthase complex consists of a soluble F(1) head domain (subunits alpha(3) and beta(3)) - the catalytic core - and a membrane F(0) domain - the membrane proton channel (subunits c, a, 8, e, f, g, k and j). These two domains are linked by a central stalk (subunits gamma, delta, and epsilon) rotating inside the F1 region and a stationary peripheral stalk (subunits F6, b, d, and OSCP).

The protein resides in the mitochondrion. It localises to the mitochondrion inner membrane. Subunit g, of the mitochondrial membrane ATP synthase complex (F(1)F(0) ATP synthase or Complex V) that produces ATP from ADP in the presence of a proton gradient across the membrane which is generated by electron transport complexes of the respiratory chain. ATP synthase complex consist of a soluble F(1) head domain - the catalytic core - and a membrane F(1) domain - the membrane proton channel. These two domains are linked by a central stalk rotating inside the F(1) region and a stationary peripheral stalk. During catalysis, ATP synthesis in the catalytic domain of F(1) is coupled via a rotary mechanism of the central stalk subunits to proton translocation. In vivo, can only synthesize ATP although its ATP hydrolase activity can be activated artificially in vitro. Part of the complex F(0) domain. The sequence is that of ATP synthase F(0) complex subunit g, mitochondrial from Homo sapiens (Human).